The primary structure comprises 476 residues: Glutamate--tRNA ligase (476 aa).

Residues 9–19 (PSPTGTLHIGT) carry the 'HIGH' region motif. Positions 248-252 (KLSKR) match the 'KMSKS' region motif. Position 251 (Lys251) interacts with ATP.

It belongs to the class-I aminoacyl-tRNA synthetase family. Glutamate--tRNA ligase type 1 subfamily. In terms of assembly, monomer.

It is found in the cytoplasm. It carries out the reaction tRNA(Glu) + L-glutamate + ATP = L-glutamyl-tRNA(Glu) + AMP + diphosphate. Catalyzes the attachment of glutamate to tRNA(Glu) in a two-step reaction: glutamate is first activated by ATP to form Glu-AMP and then transferred to the acceptor end of tRNA(Glu). The chain is Glutamate--tRNA ligase from Prochlorococcus marinus (strain MIT 9313).